The following is a 316-amino-acid chain: MGVAAVFTAVQSDLGALVSEASNSRSADIDLMTTAQILACMNAEDRKIADAVAAELPAIAQTVDRIVAAIGRGGRLIYIGAGTSGRLGVLDASECPPTFSVPPGMVVGLIAGGDTALRTSVEAAEDDEATGAEDVKAIGLTTKDVVIGIAVSGRTPFVMGAIDYARRIGAFTAALTCNPGSPMADLADIAISPVVGPEVVTGSTRLKSGTAQKMILNMLSTASMIRLGKTWGNRMVDVTISNRKLADRATAMLRDATGCSADDARTLLDQSNGSVKLAILMQITGCDADAARANLEAENGFLRKAIERAEKTPPQS.

In terms of domain architecture, SIS spans 66–229 (IVAAIGRGGR…STASMIRLGK (164 aa)). The active-site Proton donor is the Glu94. Glu125 is an active-site residue.

Belongs to the GCKR-like family. MurNAc-6-P etherase subfamily. As to quaternary structure, homodimer.

The enzyme catalyses N-acetyl-D-muramate 6-phosphate + H2O = N-acetyl-D-glucosamine 6-phosphate + (R)-lactate. It participates in amino-sugar metabolism; 1,6-anhydro-N-acetylmuramate degradation. The protein operates within amino-sugar metabolism; N-acetylmuramate degradation. It functions in the pathway cell wall biogenesis; peptidoglycan recycling. In terms of biological role, specifically catalyzes the cleavage of the D-lactyl ether substituent of MurNAc 6-phosphate, producing GlcNAc 6-phosphate and D-lactate. Together with AnmK, is also required for the utilization of anhydro-N-acetylmuramic acid (anhMurNAc) either imported from the medium or derived from its own cell wall murein, and thus plays a role in cell wall recycling. This chain is N-acetylmuramic acid 6-phosphate etherase, found in Jannaschia sp. (strain CCS1).